A 459-amino-acid polypeptide reads, in one-letter code: Hypotaurine/taurine--pyruvate aminotransferase (459 aa).

The residue at position 287 (lysine 287) is an N6-(pyridoxal phosphate)lysine.

It belongs to the class-III pyridoxal-phosphate-dependent aminotransferase family. Pyridoxal 5'-phosphate is required as a cofactor.

It catalyses the reaction hypotaurine + pyruvate = 2-sulfinoacetaldehyde + L-alanine. It carries out the reaction taurine + pyruvate = sulfoacetaldehyde + L-alanine. The protein operates within organosulfur degradation. Functionally, converts hypotaurine to alanine and sulfinoacetaldehyde, which desulfinates spontaneously to acetaldehyde and sulfite. Can also catalyze the degradation of taurine into alanine and sulfoacetaldehyde, which is stable. Has 2-fold higher aminotransferase activity with hypotaurine as the substrate. This Paracoccus denitrificans (strain Pd 1222) protein is Hypotaurine/taurine--pyruvate aminotransferase.